Here is a 331-residue protein sequence, read N- to C-terminus: DNA-directed RNA polymerase subunit alpha (331 aa).

The tract at residues 1 to 226 is alpha N-terminal domain (alpha-NTD); that stretch reads MLIAQRPTLT…ELFGLARELN (226 aa). The tract at residues 243–331 is alpha C-terminal domain (alpha-CTD); the sequence is LSSELSMPIE…SYDEDETTTN (89 aa).

This sequence belongs to the RNA polymerase alpha chain family. As to quaternary structure, homodimer. The RNAP catalytic core consists of 2 alpha, 1 beta, 1 beta' and 1 omega subunit. When a sigma factor is associated with the core the holoenzyme is formed, which can initiate transcription.

It catalyses the reaction RNA(n) + a ribonucleoside 5'-triphosphate = RNA(n+1) + diphosphate. In terms of biological role, DNA-dependent RNA polymerase catalyzes the transcription of DNA into RNA using the four ribonucleoside triphosphates as substrates. The protein is DNA-directed RNA polymerase subunit alpha of Clavibacter sepedonicus (Clavibacter michiganensis subsp. sepedonicus).